A 315-amino-acid polypeptide reads, in one-letter code: MHREPPKKKAEKRLFDASSFGKDLLAGGVAAAVSKTAVAPIERVKLLLQVQASSKQISPEARYKGMVDCLVRIPREQGFFSFWRGNLANVIRYFPTQALNFAFKDKYKQLFMSGVNKEKQFWRWFLANLASGGAAGATSLCVVYPLDFARTRLGVDIGKGPEERQFKGLGDCIMKIAKSDGIAGLYQGFGVSVQGIIVYRASYFGAYDTVKGLLPKPKKTPFLVSFFIAQVVTTCSGILSYPFDTVRRRMMMQSGEAKRQYKGTLDCFVKIYQHEGINSFFRGAFSNVLRGTGGALVLVLYDKIKEFFHIDIGGR.

The Mitochondrial intermembrane segment spans residues 1–19 (MHREPPKKKAEKRLFDASS). One copy of the Solcar 1 repeat lies at 18-110 (SSFGKDLLAG…FAFKDKYKQL (93 aa)). The chain crosses the membrane as a helical span at residues 20-49 (FGKDLLAGGVAAAVSKTAVAPIERVKLLLQ). Topologically, residues 50–86 (VQASSKQISPEARYKGMVDCLVRIPREQGFFSFWRGN) are mitochondrial matrix. The helical transmembrane segment at 87–111 (LANVIRYFPTQALNFAFKDKYKQLF) threads the bilayer. The ADP site is built by arginine 92 and lysine 104. At 112 to 121 (MSGVNKEKQF) the chain is on the mitochondrial intermembrane side. The helical transmembrane segment at 122-142 (WRWFLANLASGGAAGATSLCV) threads the bilayer. Solcar repeat units lie at residues 123 to 213 (RWFL…VKGL) and 220 to 307 (TPFL…IKEF). The Mitochondrial matrix segment spans residues 143-190 (VYPLDFARTRLGVDIGKGPEERQFKGLGDCIMKIAKSDGIAGLYQGFG). Residues 191-211 (VSVQGIIVYRASYFGAYDTVK) traverse the membrane as a helical segment. Residues 212-222 (GLLPKPKKTPF) lie on the Mitochondrial intermembrane side of the membrane. A helical membrane pass occupies residues 223–243 (LVSFFIAQVVTTCSGILSYPF). At 244-283 (DTVRRRMMMQSGEAKRQYKGTLDCFVKIYQHEGINSFFRG) the chain is on the mitochondrial matrix side. An ADP-binding site is contributed by arginine 247. An important for transport activity region spans residues 247-252 (RRRMMM). Positions 247–252 (RRRMMM) match the Nucleotide carrier signature motif motif. The helical transmembrane segment at 284–301 (AFSNVLRGTGGALVLVLY) threads the bilayer. Residues 302-315 (DKIKEFFHIDIGGR) are Mitochondrial intermembrane-facing.

This sequence belongs to the mitochondrial carrier (TC 2.A.29) family. As to quaternary structure, monomer.

It localises to the mitochondrion inner membrane. The protein localises to the membrane. The protein resides in the cell projection. Its subcellular location is the cilium. It is found in the flagellum membrane. It catalyses the reaction ADP(in) + ATP(out) = ADP(out) + ATP(in). It carries out the reaction dATP(out) + ADP(in) = dATP(in) + ADP(out). The enzyme catalyses dADP(in) + ADP(out) = dADP(out) + ADP(in). The catalysed reaction is H(+)(in) = H(+)(out). The matrix-open state (m-state) is inhibited by the membrane-permeable bongkrekic acid (BKA). The cytoplasmic-open state (c-state) is inhibited by the membrane-impermeable toxic inhibitor carboxyatractyloside (CATR). Proton transporter activity is inhibited by ADP:ATP antiporter activity. ADP:ATP antiporter that mediates import of ADP into the mitochondrial matrix for ATP synthesis, and export of ATP out to fuel the cell. Cycles between the cytoplasmic-open state (c-state) and the matrix-open state (m-state): operates by the alternating access mechanism with a single substrate-binding site intermittently exposed to either the cytosolic (c-state) or matrix (m-state) side of the inner mitochondrial membrane. Specifically required during spermatogenesis, probably to mediate ADP:ATP exchange in spermatocytes. Large ATP supplies from mitochondria may be critical for normal progression of spermatogenesis during early stages of meiotic prophase I, including DNA double-strand break repair and chromosomal synapsis. In addition to its ADP:ATP antiporter activity, also involved in mitochondrial uncoupling and mitochondrial permeability transition pore (mPTP) activity. Plays a role in mitochondrial uncoupling by acting as a proton transporter: proton transport uncouples the proton flows via the electron transport chain and ATP synthase to reduce the efficiency of ATP production and cause mitochondrial thermogenesis. Proton transporter activity is inhibited by ADP:ATP antiporter activity, suggesting that SLC25A31/ANT4 acts as a master regulator of mitochondrial energy output by maintaining a delicate balance between ATP production (ADP:ATP antiporter activity) and thermogenesis (proton transporter activity). Proton transporter activity requires free fatty acids as cofactor, but does not transport it. Among nucleotides, may also exchange ADP for dATP and dADP. Also plays a key role in mPTP opening, a non-specific pore that enables free passage of the mitochondrial membranes to solutes of up to 1.5 kDa, and which contributes to cell death. It is however unclear if SLC25A31/ANT4 constitutes a pore-forming component of mPTP or regulates it. This is ADP/ATP translocase 4 from Macaca fascicularis (Crab-eating macaque).